Reading from the N-terminus, the 733-residue chain is 1,4-alpha-glucan branching enzyme GlgB (733 aa).

Asp412 serves as the catalytic Nucleophile. Glu467 acts as the Proton donor in catalysis.

Belongs to the glycosyl hydrolase 13 family. GlgB subfamily. Monomer.

The enzyme catalyses Transfers a segment of a (1-&gt;4)-alpha-D-glucan chain to a primary hydroxy group in a similar glucan chain.. It functions in the pathway glycan biosynthesis; glycogen biosynthesis. Functionally, catalyzes the formation of the alpha-1,6-glucosidic linkages in glycogen by scission of a 1,4-alpha-linked oligosaccharide from growing alpha-1,4-glucan chains and the subsequent attachment of the oligosaccharide to the alpha-1,6 position. The chain is 1,4-alpha-glucan branching enzyme GlgB from Burkholderia vietnamiensis (strain G4 / LMG 22486) (Burkholderia cepacia (strain R1808)).